Reading from the N-terminus, the 141-residue chain is MSTLQVDIVSAEEQLYAGQASMVIAPAAEGDVGIAPRHAPLLTRLRPGELRITPEGDEEEFFFYASGGLLEVQPHKVTVLADTAVRARDIDEAAALEAKRRAEEKLREQKDEVDYSSVQAELAEAMAQLRTLESLRKRAKR.

The protein belongs to the ATPase epsilon chain family. In terms of assembly, F-type ATPases have 2 components, CF(1) - the catalytic core - and CF(0) - the membrane proton channel. CF(1) has five subunits: alpha(3), beta(3), gamma(1), delta(1), epsilon(1). CF(0) has three main subunits: a, b and c.

The protein resides in the cell inner membrane. In terms of biological role, produces ATP from ADP in the presence of a proton gradient across the membrane. This is ATP synthase epsilon chain from Halorhodospira halophila (strain DSM 244 / SL1) (Ectothiorhodospira halophila (strain DSM 244 / SL1)).